The sequence spans 310 residues: N-acetylmuramic acid 6-phosphate etherase (310 aa).

In terms of domain architecture, SIS spans 64–227; the sequence is ITSRLKSNGR…STSVMIKLGK (164 aa). The Proton donor role is filled by Glu92. Glu123 is a catalytic residue.

It belongs to the GCKR-like family. MurNAc-6-P etherase subfamily. Homodimer.

It carries out the reaction N-acetyl-D-muramate 6-phosphate + H2O = N-acetyl-D-glucosamine 6-phosphate + (R)-lactate. It functions in the pathway amino-sugar metabolism; N-acetylmuramate degradation. In terms of biological role, specifically catalyzes the cleavage of the D-lactyl ether substituent of MurNAc 6-phosphate, producing GlcNAc 6-phosphate and D-lactate. This is N-acetylmuramic acid 6-phosphate etherase from Prochlorococcus marinus (strain NATL2A).